The following is an 88-amino-acid chain: Large ribosomal subunit protein bL27 (88 aa).

The disordered stretch occupies residues 1 to 21; that stretch reads MAHKKGVGSSRNGRDSQPKML.

Belongs to the bacterial ribosomal protein bL27 family.

This is Large ribosomal subunit protein bL27 from Pelotomaculum thermopropionicum (strain DSM 13744 / JCM 10971 / SI).